The primary structure comprises 323 residues: Thymidine kinase (323 aa).

ATP is bound at residue 11-18 (GPHGLGKT). E36 (proton acceptor) is an active-site residue. Residues Y54 and Q78 each coordinate substrate. Position 169 (R169) interacts with ATP. R175 contacts substrate.

This sequence belongs to the herpesviridae thymidine kinase family. As to quaternary structure, homodimer.

The enzyme catalyses thymidine + ATP = dTMP + ADP + H(+). Functionally, catalyzes the transfer of the gamma-phospho group of ATP to thymidine to generate dTMP in the salvage pathway of pyrimidine synthesis. The dTMP serves as a substrate for DNA polymerase during viral DNA replication. Allows the virus to be reactivated and to grow in non-proliferative cells lacking a high concentration of phosphorylated nucleic acid precursors. The sequence is that of Thymidine kinase from Bos taurus (Bovine).